A 236-amino-acid polypeptide reads, in one-letter code: MMDDSFKNYWMNKLKYFSLFILLFAIYWFPDVILGYPEIYLKSLVGYDRQATATWIFLGNMAISLFLGILICYKLGYYKNTLSIFKIKNILFLLFTTIVLFIIYFFTFTYYNSHFITPGIAKEQAAYSRQIVFPFVQFISFAICAPIFEEAAFRTTIYRFFKNDKIAFIVSSISFAWMHTGANPILIVYLPMSVVLTLIYHRRRVLGESILVHCLMNALLPTIIVFLQTITGLYYL.

6 helical membrane-spanning segments follow: residues 16 to 36 (YFSLFILLFAIYWFPDVILGY), 51 to 71 (ATATWIFLGNMAISLFLGILI), 90 to 110 (ILFLLFTTIVLFIIYFFTFTY), 131 to 151 (IVFPFVQFISFAICAPIFEEA), 180 to 200 (TGANPILIVYLPMSVVLTLIY), and 210 to 230 (ILVHCLMNALLPTIIVFLQTI).

Belongs to the UPF0177 family.

The protein resides in the cell membrane. This is UPF0177 protein YaiH (yaiH) from Lactococcus lactis subsp. lactis (strain IL1403) (Streptococcus lactis).